A 107-amino-acid polypeptide reads, in one-letter code: Replication initiation control protein YabA (107 aa).

Positions 81, 83, 97, and 100 each coordinate Zn(2+).

This sequence belongs to the YabA family. As to quaternary structure, homotetramer. Interacts with both DnaA and DnaN, acting as a bridge between these two proteins. Requires Zn(2+) as cofactor.

It is found in the cytoplasm. The protein resides in the nucleoid. Functionally, involved in control of chromosome replication initiation. Inhibits the cooperative binding of DnaA to the oriC region, thus negatively regulating initiation of chromosome replication. Inhibits the ability of DnaA-ATP to form a helix on DNA; does not disassemble preformed DnaA-DNA helices. Decreases the residence time of DnaA on the chromosome at its binding sites (oriC, replication forks and promoter-binding sites). Tethers DnaA to the replication machinery via the DNA polymerase beta sliding clamp subunit (dnaN). Associates with oriC and other DnaA targets on the chromosome in a DnaA-dependent manner. This Streptococcus pyogenes serotype M3 (strain ATCC BAA-595 / MGAS315) protein is Replication initiation control protein YabA.